The primary structure comprises 189 residues: MTEYKLVVVGAGGVGKSALTIQLIQNHFVDEYDPTIEDSYRKQVVIDGETCLLDILDTAGQEEYSAMRDQYMRTGEGFLCVFAINNTKSFEDIHHYREQIKRVKDSEDVPMVLVGNKCDLPSRTVDTKQAQDLARSYGIPFIETSAKTRQRVEDAFYTLVREIRQYRLKKISKEEKTPGCVKIKKCIIM.

Met-1 bears the N-acetylmethionine; in GTPase KRas; alternate mark. Thr-2 is subject to N-acetylthreonine; in GTPase KRas, N-terminally processed. GTP-binding positions include 10–18 (GAGGVGKSA), 29–35 (VDEYDPT), and 59–60 (AG). Residues 32–40 (YDPTIEDSY) carry the Effector region motif. Thr-35 carries (Microbial infection) O-linked (Glc) threonine; by P.sordellii toxin TcsL glycosylation. Lys-104 is subject to N6-acetyllysine. 116-119 (NKCD) provides a ligand contact to GTP. A hypervariable region region spans residues 166–185 (YRLKKISKEEKTPGCVKIKK). Lys-170 is covalently cross-linked (Glycyl lysine isopeptide (Lys-Gly) (interchain with G-Cter in ubiquitin)). The S-palmitoyl cysteine moiety is linked to residue Cys-180. 3 N6-palmitoyl lysine lipidation sites follow: Lys-182, Lys-184, and Lys-185. Position 186 is a cysteine methyl ester (Cys-186). Cys-186 carries S-farnesyl cysteine lipidation. The propeptide at 187–189 (IIM) is removed in mature form.

This sequence belongs to the small GTPase superfamily. Ras family. As to quaternary structure, interacts with PHLPP. Interacts (active GTP-bound form preferentially) with RGS14. Interacts (when farnesylated) with PDE6D; this promotes dissociation from the cell membrane. Interacts with SOS1. Interacts (when farnesylated) with GPR31. Interacts with RAP1GDS1. Interacts (active GTP-bound form) with both SHOC2 and PP1c (all isoforms) to form a tertiary complex; SHOC2 and PP1c preferably bind M-Ras/MRAS, but they also bind K-Ras/KRAS, N-Ras/NRAS and H-Ras/HRAS. Interacts (GTP-bound form) with MAPKAP1/SIN1; inhibiting K-Ras/KRAS activity. Interacts with GPR31; in a farnelysation-dependent manner. Post-translationally, acetylation at Lys-104 prevents interaction with guanine nucleotide exchange factors (GEFs). Palmitoylated at Lys-182, Lys-184 and Lys-185. Palmitoylation on lysine residues is promoted by palmitoylation at Cys-180. Lysine-depalmitoylation by SIRT2 promotes its localization to endomembranes in endocytic pathways. In terms of processing, ubiquitinated by the BCR(LZTR1) E3 ubiquitin ligase complex at Lys-170 in a non-degradative manner, leading to inhibit Ras signaling by decreasing Ras association with membranes. Post-translationally, (Microbial infection) Glucosylated at Thr-35 by P.sordellii toxin TcsL.

It is found in the cell membrane. The protein resides in the endomembrane system. The protein localises to the cytoplasm. It localises to the cytosol. It catalyses the reaction GTP + H2O = GDP + phosphate + H(+). With respect to regulation, alternates between an inactive form bound to GDP and an active form bound to GTP. Activated by a guanine nucleotide-exchange factor (GEF) and inactivated by a GTPase-activating protein (GAP). Interaction with SOS1 promotes exchange of bound GDP to GTP. Functionally, ras proteins bind GDP/GTP and possess intrinsic GTPase activity. Plays an important role in the regulation of cell proliferation. Plays a role in promoting oncogenic events by inducing transcriptional silencing of tumor suppressor genes (TSGs) in colorectal cancer (CRC) cells in a ZNF304-dependent manner. The polypeptide is GTPase KRas (KRAS) (Homo sapiens (Human)).